The primary structure comprises 344 residues: Beta-1,4-galactosyltransferase 4 (344 aa).

Over 1-12 (MGCNPPYLLSYR) the chain is Cytoplasmic. A helical; Signal-anchor for type II membrane protein membrane pass occupies residues 13–38 (LRLLLLFTLCLTVLGWATSNYFVGAI). Topologically, residues 39-344 (QVIPRAKNFM…NITVDFWTAA (306 aa)) are lumenal. A disulfide bridge links Cys-77 with Cys-118. UDP-alpha-D-galactose contacts are provided by residues 129–133 (PHRNR), 168–170 (FNR), and 195–196 (VD). Cys-189 and Cys-208 form a disulfide bridge. Asp-196 lines the Mn(2+) pocket. The N-linked (GlcNAc...) asparagine glycan is linked to Asn-220. Residues Tyr-224 and Trp-256 each contribute to the UDP-alpha-D-galactose site. Position 258 to 261 (258 to 261 (GEDD)) interacts with N-acetyl-D-glucosamine. A Mn(2+)-binding site is contributed by His-289. Residue 289 to 291 (HTR) participates in UDP-alpha-D-galactose binding. Arg-301 provides a ligand contact to N-acetyl-D-glucosamine. N-linked (GlcNAc...) asparagine glycosylation occurs at Asn-335.

It belongs to the glycosyltransferase 7 family. Interacts with SLC35A2/UGT1. The cofactor is Mn(2+).

Its subcellular location is the golgi apparatus membrane. It is found in the secreted. The enzyme catalyses N-acetyl-D-glucosamine + UDP-alpha-D-galactose = beta-D-galactosyl-(1-&gt;4)-N-acetyl-D-glucosamine + UDP + H(+). It catalyses the reaction a beta-D-GlcNAc-(1-&gt;3)-beta-D-Gal-(1-&gt;4)-beta-D-Glc-(1&lt;-&gt;1)-Cer(d18:1(4E)) + UDP-alpha-D-galactose = a neolactoside nLc4Cer(d18:1(4E)) + UDP + H(+). The catalysed reaction is 3-O-{beta-D-galactosyl-(1-&gt;3)-[6-O-sulfo-N-acetyl-beta-D-glucosaminyl-(1-&gt;6)]-N-acetyl-alpha-D-galactosaminyl}-L-seryl-[protein] + UDP-alpha-D-galactose = 3-O-{beta-D-galactosyl-(1-&gt;3)-[beta-D-galactosyl-(1-&gt;4)-6-O-sulfo-N-acetyl-beta-D-glucosaminyl-(1-&gt;6)]-N-acetyl-alpha-D-galactosaminyl}-L-seryl-[protein] + UDP + H(+). It carries out the reaction 3-O-{beta-D-galactosyl-(1-&gt;3)-[6-O-sulfo-N-acetyl-beta-D-glucosaminyl-(1-&gt;6)]-N-acetyl-alpha-D-galactosaminyl}-L-threonyl-[protein] + UDP-alpha-D-galactose = 3-O-{beta-D-galactosyl-(1-&gt;3)-[beta-D-galactosyl-(1-&gt;4)-6-O-sulfo-N-acetyl-beta-D-glucosaminyl-(1-&gt;6)]-N-acetyl-alpha-D-galactosaminyl}-L-threonyl-[protein] + UDP + H(+). It functions in the pathway protein modification; protein glycosylation. It participates in glycolipid biosynthesis. Its function is as follows. Galactose (Gal) transferase involved in the synthesis of terminal N-acetyllactosamine (LacNac) unit present on glycan chains of glycoproteins and glycosphingolipids. Catalyzes the transfer of Gal residue via a beta1-&gt;4 linkage from UDP-Gal to the non-reducing terminal N-acetyl glucosamine 6-O-sulfate (6-O-sulfoGlcNAc) in the linearly growing chain of both N- and O-linked keratan sulfate proteoglycans. Cooperates with B3GNT7 N-acetyl glucosamine transferase and CHST6 and CHST1 sulfotransferases to construct and elongate mono- and disulfated disaccharide units [-&gt;3Galbeta1-&gt;4(6-sulfoGlcNAcbeta)1-&gt;] and [-&gt;3(6-sulfoGalbeta)1-&gt;4(6-sulfoGlcNAcbeta)1-&gt;] within keratan sulfate polymer. Transfers Gal residue via a beta1-&gt;4 linkage to terminal 6-O-sulfoGlcNAc within the LacNac unit of core 2 O-glycans forming 6-sulfo-sialyl-Lewis X (sLex). May contribute to the generation of sLex epitope on mucin-type glycoproteins that serve as ligands for SELL/L-selectin, a major regulator of leukocyte migration. In the biosynthesis pathway of neolacto-series glycosphingolipids, transfers Gal residue via a beta1-&gt;4 linkage to terminal GlcNAc of a lactotriaosylceramide (Lc3Cer) acceptor to form a neolactotetraosylceramide. This is Beta-1,4-galactosyltransferase 4 (B4galt4) from Rattus norvegicus (Rat).